The chain runs to 251 residues: 5'-nucleotidase SurE (251 aa).

Positions 8, 9, 39, and 90 each coordinate a divalent metal cation.

This sequence belongs to the SurE nucleotidase family. A divalent metal cation is required as a cofactor.

It is found in the cytoplasm. The enzyme catalyses a ribonucleoside 5'-phosphate + H2O = a ribonucleoside + phosphate. Nucleotidase that shows phosphatase activity on nucleoside 5'-monophosphates. In Legionella pneumophila subsp. pneumophila (strain Philadelphia 1 / ATCC 33152 / DSM 7513), this protein is 5'-nucleotidase SurE.